We begin with the raw amino-acid sequence, 167 residues long: U-scoloptoxin(08)-Er5a (167 aa).

The N-terminal stretch at 1-22 (MKTNCEFPLLCLLIVLVANVEG) is a signal peptide. A propeptide spanning residues 23-94 (EVEDTGLKMV…KRLWRNWERR (72 aa)) is cleaved from the precursor. RLWRNWE repeat units lie at residues 34–40 (RLWRNWE), 61–67 (RLWRNWE), and 86–92 (RLWRNWE). Residue glutamine 95 is modified to Pyrrolidone carboxylic acid. Residues 107-113 (ELWRNWE) form an RLWRNWE 4; approximate repeat. The propeptide occupies 112–118 (WEDLKRR). Glutamine 119 is modified (pyrrolidone carboxylic acid). The RLWRNWE 5 repeat unit spans residues 134–140 (RLWRNWE). A propeptide spanning residues 139–167 (WEDNHATLRKRSADSLSRQKRLGKERGKE) is cleaved from the precursor. The tract at residues 147–167 (RKRSADSLSRQKRLGKERGKE) is disordered.

The protein belongs to the scoloptoxin-08 family. In terms of tissue distribution, expressed by the venom gland.

It is found in the secreted. The protein is U-scoloptoxin(08)-Er5a of Ethmostigmus rubripes (Giant centipede).